The primary structure comprises 329 residues: MSKPAMRVAVTGAAGQIGYALLFRIASGEMLGKDQPVILQLLEIPDEKAQKALKGVIMELDDCAFPLLQEVTAHSDPRTAFKDADVALLVGARPRGPGMERKDLLSVNAQIFTAQGKALNDVASRNVKVLVVGNPANTNAYIAMKSAPDLPAKNFTAMLRLDHNRALSQLAAKSGKAVADIEKLVVWGNHSPTMYPDYRFATVGGQSLAKLINDDAWNRDTFIPTVGKRGAAIIEARGLSSAASAANAAIDHVRDWVLGSNGKWVTMGIPSDGSYGIPEGIIYGVPVTTENGEYKRVEGLEIDAFSRERLDFTLKELLEERDGVKDLLK.

NAD(+) is bound at residue 12–18 (GAAGQIG). Positions 95 and 101 each coordinate substrate. NAD(+) contacts are provided by residues Asn108, Gln115, and 132–134 (VGN). 2 residues coordinate substrate: Asn134 and Arg165. The Proton acceptor role is filled by His190.

The protein belongs to the LDH/MDH superfamily. MDH type 2 family.

It carries out the reaction (S)-malate + NAD(+) = oxaloacetate + NADH + H(+). Catalyzes the reversible oxidation of malate to oxaloacetate. This chain is Malate dehydrogenase, found in Bordetella petrii (strain ATCC BAA-461 / DSM 12804 / CCUG 43448).